The primary structure comprises 296 residues: MAGKSPLINLNNGVKMPALGLGVFAASAEETASAIASAISSGYRLIDTARSYNNEAQVGEGIRNSGVDRAEMFVTTKLFNCDYGYERALRAFDESLGRLGLDYVDLYLLHWPTKDWNATIQSWKAAEKILGDGRARAIGVCNFLEDQLDELIAASDVVPAVNQIELHPYFAQKPLLAKNRALGIVTEAWSPIGGAINDGDGDNHGGRKHPLTDPVITTIAEAHGRSAAQVILRWHFQNDVVAIPKSVNPERIAKNIDVFDFALSDAEMAQLDELDTGVRIGPDPRDVDTSSFAEFV.

G13 to G22 is an NADP(+) binding site. Y52 (proton donor) is an active-site residue. H110 provides a ligand contact to substrate.

This sequence belongs to the aldo/keto reductase family. Monomer.

The catalysed reaction is morphine + NAD(+) = morphinone + NADH + H(+). It catalyses the reaction morphine + NADP(+) = morphinone + NADPH + H(+). The protein operates within alkaloid degradation; codeine degradation. It participates in alkaloid degradation; morphine degradation. Its function is as follows. Oxidizes only the C-6 hydroxy group of morphine and codeine. The sequence is that of Morphine 6-dehydrogenase (morA) from Pseudomonas putida (Arthrobacter siderocapsulatus).